Reading from the N-terminus, the 188-residue chain is MNSEAEFLANHFLIAMPGLTDPHFAKTVTLVCQHNADGALGIIINRPSELKLSDIMRQMEIDLKVAELGDLPVFFGGPVHPERGFILHEPATVWASTLVVSERLALTTSRDILEAVGRGEGPRRMLLALGYAGWGQGQLEREIIDNSWLNAPSDNAVIFEHPPGRRWKAAADLVGVDISLLTSQAGHG.

The protein belongs to the UPF0301 (AlgH) family.

This Methylococcus capsulatus (strain ATCC 33009 / NCIMB 11132 / Bath) protein is UPF0301 protein MCA2336 2.